The chain runs to 471 residues: Sulfate adenylyltransferase subunit 1 (471 aa).

A tr-type G domain is found at 24–240 (KSLLRFLTCG…ESADVERELE (217 aa)). The tract at residues 33-40 (GSVDDGKS) is G1. 33–40 (GSVDDGKS) serves as a coordination point for GTP. Residues 91–95 (GITID) form a G2 region. A G3 region spans residues 112 to 115 (DTPG). Residues 112–116 (DTPGH) and 167–170 (NKMD) each bind GTP. Residues 167 to 170 (NKMD) are G4. The G5 stretch occupies residues 204 to 206 (SAL).

It belongs to the TRAFAC class translation factor GTPase superfamily. Classic translation factor GTPase family. CysN/NodQ subfamily. Heterodimer composed of CysD, the smaller subunit, and CysN.

It carries out the reaction sulfate + ATP + H(+) = adenosine 5'-phosphosulfate + diphosphate. Its pathway is sulfur metabolism; hydrogen sulfide biosynthesis; sulfite from sulfate: step 1/3. With CysD forms the ATP sulfurylase (ATPS) that catalyzes the adenylation of sulfate producing adenosine 5'-phosphosulfate (APS) and diphosphate, the first enzymatic step in sulfur assimilation pathway. APS synthesis involves the formation of a high-energy phosphoric-sulfuric acid anhydride bond driven by GTP hydrolysis by CysN coupled to ATP hydrolysis by CysD. The chain is Sulfate adenylyltransferase subunit 1 from Aeromonas salmonicida (strain A449).